Here is a 407-residue protein sequence, read N- to C-terminus: Phosphopentomutase (407 aa).

6 residues coordinate Mn(2+): Asp10, Asp306, His311, Asp347, His348, and His359.

Belongs to the phosphopentomutase family. The cofactor is Mn(2+).

The protein localises to the cytoplasm. It carries out the reaction 2-deoxy-alpha-D-ribose 1-phosphate = 2-deoxy-D-ribose 5-phosphate. The catalysed reaction is alpha-D-ribose 1-phosphate = D-ribose 5-phosphate. It participates in carbohydrate degradation; 2-deoxy-D-ribose 1-phosphate degradation; D-glyceraldehyde 3-phosphate and acetaldehyde from 2-deoxy-alpha-D-ribose 1-phosphate: step 1/2. Isomerase that catalyzes the conversion of deoxy-ribose 1-phosphate (dRib-1-P) and ribose 1-phosphate (Rib-1-P) to deoxy-ribose 5-phosphate (dRib-5-P) and ribose 5-phosphate (Rib-5-P), respectively. The sequence is that of Phosphopentomutase from Yersinia pestis bv. Antiqua (strain Antiqua).